The following is a 362-amino-acid chain: G-protein coupled receptor 4 (362 aa).

At 1–8 the chain is on the extracellular side; the sequence is MGNRTLEG. N3 is a glycosylation site (N-linked (GlcNAc...) asparagine). The chain crosses the membrane as a helical span at residues 9-45; that stretch reads CHVDSRMDHLFPPSLYIFVIGVGLPTNCLALWAAYRQ. 2 cysteine pairs are disulfide-bonded: C9–C258 and C90–C168. At 46–49 the chain is on the cytoplasmic side; it reads VRQR. A helical membrane pass occupies residues 50–80; sequence NELGVYLMNLSIADLLYICTLPLWVDYFLHH. The Extracellular segment spans residues 81-85; that stretch reads DNWIH. The helical transmembrane segment at 86–121 threads the bilayer; sequence GPGSCKLFGFIFYTNIYISIAFLCCISVDRYLAVAH. Residues 122 to 129 lie on the Cytoplasmic side of the membrane; sequence PLRFARLR. Residues 130–156 traverse the membrane as a helical segment; that stretch reads RVKTAVAVSSVVWATELGANSAPLFHD. Residues 157–172 are Extracellular-facing; that stretch reads ELFRDRYNHTFCFEKF. The segment at 157–172 is extracellular loop 2 (ECL2); the sequence is ELFRDRYNHTFCFEKF. N164 is a glycosylation site (N-linked (GlcNAc...) asparagine). The chain crosses the membrane as a helical span at residues 173-210; it reads PMEGWVAWMNLYRVFVGFLFPWALMLLSYRGILRAVRG. At 211-214 the chain is on the cytoplasmic side; that stretch reads SVST. The chain crosses the membrane as a helical span at residues 215–250; the sequence is ERQEKVKIKRLALSLIAIVLVCFAPYHVLLLSRSAV. Topologically, residues 251 to 260 are extracellular; it reads YLRRPRDCGF. Residues 261 to 289 traverse the membrane as a helical segment; sequence EERVFSAYHSSLAFTSLNCVADPILYCLV. Residues 290–362 lie on the Cytoplasmic side of the membrane; sequence NEGARSDVAK…VQLKMLPPAQ (73 aa).

It belongs to the G-protein coupled receptor 1 family.

It is found in the cell membrane. Its activity is regulated as follows. Activated by a network of residues that connects an extracellular-facing cavity to Glu-145, a conserved charged residue buried in the transmembrane core of the receptor. Protonation likely drives conformational changes in extracellular loop 2 (ECL2), which stabilizes movement of transmembrane 3 (TM3) and a series of rearrangements that connect the extracellular-facing cavity to Glu-145, a residue only conserved in proton-sensing G-protein coupled receptors. Its function is as follows. Proton-sensing G-protein coupled receptor activated by extracellular pH, which is required to monitor pH changes and generate adaptive reactions. Activated by an optimal pH of 6.8-7.2. Ligand binding causes a conformation change that triggers signaling via guanine nucleotide-binding proteins (G proteins) and modulates the activity of downstream effectors, such as adenylate cyclase. GPR4 is mainly coupled to G(s) G proteins and mediates activation of adenylate cyclase activity. May also couple with G(q) and G(12)/G(13) G proteins. Acts as a key regulator of respiratory sensitivity to CO2/H(+) in brain retrotrapezoid nucleus neurons: acts by mediating detection of protons generated by the formation of carbonic acid in the blood, an important mechanism to impulse to breathe. Also acts as a regulator of acid secretion in the kidney collecting duct by maintaining acid-base homeostasis in the kidney. Acidosis-induced GPR4 activation increases paracellular gap formation and permeability of vascular endothelial cells, possibly through the G(12)/G(13)/Rho GTPase signaling pathway. This chain is G-protein coupled receptor 4 (GPR4), found in Bos taurus (Bovine).